The sequence spans 149 residues: Transcriptional repressor NrdR (149 aa).

A zinc finger spans residues 3–34; it reads CPFCGFEESKVVDSRSTDDNTTIRRRRECLKC. The region spanning 49–139 is the ATP-cone domain; sequence ILVIKKDLTR…VYRQFKDIDT (91 aa).

It belongs to the NrdR family. Zn(2+) is required as a cofactor.

In terms of biological role, negatively regulates transcription of bacterial ribonucleotide reductase nrd genes and operons by binding to NrdR-boxes. In Clostridium beijerinckii (strain ATCC 51743 / NCIMB 8052) (Clostridium acetobutylicum), this protein is Transcriptional repressor NrdR.